Reading from the N-terminus, the 355-residue chain is Methionine import ATP-binding protein MetN 1 (355 aa).

Residues 6–245 (IDLKDIAVTF…PKAPLTVDFV (240 aa)) form the ABC transporter domain. 42 to 49 (GYSGAGKS) serves as a coordination point for ATP.

Belongs to the ABC transporter superfamily. Methionine importer (TC 3.A.1.24) family. In terms of assembly, the complex is composed of two ATP-binding proteins (MetN), two transmembrane proteins (MetI) and a solute-binding protein (MetQ).

It is found in the cell membrane. The catalysed reaction is L-methionine(out) + ATP + H2O = L-methionine(in) + ADP + phosphate + H(+). The enzyme catalyses D-methionine(out) + ATP + H2O = D-methionine(in) + ADP + phosphate + H(+). In terms of biological role, part of the ABC transporter complex MetNIQ involved in methionine import. Responsible for energy coupling to the transport system. This is Methionine import ATP-binding protein MetN 1 from Lactiplantibacillus plantarum (strain ATCC BAA-793 / NCIMB 8826 / WCFS1) (Lactobacillus plantarum).